The primary structure comprises 645 residues: Macrolide export ATP-binding/permease protein MacB (645 aa).

Residues 6–244 (IELKDVTRYY…EAPQYRYARK (239 aa)) form the ABC transporter domain. 42–49 (GQSGSGKS) provides a ligand contact to ATP. The next 4 membrane-spanning stretches (helical) occupy residues 271-291 (ALTL…LAIG), 520-540 (FSIL…IGVM), 577-597 (VVGG…VFII), and 608-628 (PLPA…FGLL).

This sequence belongs to the ABC transporter superfamily. Macrolide exporter (TC 3.A.1.122) family. Homodimer.

It localises to the cell inner membrane. In terms of biological role, non-canonical ABC transporter that contains transmembrane domains (TMD), which form a pore in the inner membrane, and an ATP-binding domain (NBD), which is responsible for energy generation. Confers resistance against macrolides. This Hyphomonas neptunium (strain ATCC 15444) protein is Macrolide export ATP-binding/permease protein MacB.